The chain runs to 482 residues: UDP-N-acetylmuramoyl-L-alanyl-D-glutamate--2,6-diaminopimelate ligase (482 aa).

Serine 30 is a binding site for UDP-N-acetyl-alpha-D-muramoyl-L-alanyl-D-glutamate. Glycine 111–threonine 117 is a binding site for ATP. UDP-N-acetyl-alpha-D-muramoyl-L-alanyl-D-glutamate contacts are provided by residues threonine 153–threonine 154, serine 180, glutamine 186, and arginine 188. Lysine 220 is modified (N6-carboxylysine). Meso-2,6-diaminopimelate is bound by residues arginine 378, aspartate 402–arginine 405, glycine 455, and glutamate 459. A Meso-diaminopimelate recognition motif motif is present at residues aspartate 402–arginine 405.

Belongs to the MurCDEF family. MurE subfamily. Requires Mg(2+) as cofactor. In terms of processing, carboxylation is probably crucial for Mg(2+) binding and, consequently, for the gamma-phosphate positioning of ATP.

The protein resides in the cytoplasm. It catalyses the reaction UDP-N-acetyl-alpha-D-muramoyl-L-alanyl-D-glutamate + meso-2,6-diaminopimelate + ATP = UDP-N-acetyl-alpha-D-muramoyl-L-alanyl-gamma-D-glutamyl-meso-2,6-diaminopimelate + ADP + phosphate + H(+). Its pathway is cell wall biogenesis; peptidoglycan biosynthesis. Functionally, catalyzes the addition of meso-diaminopimelic acid to the nucleotide precursor UDP-N-acetylmuramoyl-L-alanyl-D-glutamate (UMAG) in the biosynthesis of bacterial cell-wall peptidoglycan. This is UDP-N-acetylmuramoyl-L-alanyl-D-glutamate--2,6-diaminopimelate ligase from Bacteroides thetaiotaomicron (strain ATCC 29148 / DSM 2079 / JCM 5827 / CCUG 10774 / NCTC 10582 / VPI-5482 / E50).